The following is a 143-amino-acid chain: Hemoglobin subunit alpha-1 (143 aa).

Ser2 is subject to N-acetylserine. The Globin domain maps to 2–143 (SLSSKDKATV…RALALAEKYR (142 aa)). His60 lines the O2 pocket. His89 serves as a coordination point for heme b.

The protein belongs to the globin family. In terms of assembly, hb 1 is a heterotetramer of two alpha-1 and two beta-1 chains. Hb 3 is a heterotetramer of two alpha-1 and two beta-2 chains. As to expression, red blood cells.

Involved in oxygen transport from gills to the various peripheral tissues. The chain is Hemoglobin subunit alpha-1 (hba1) from Gadus morhua (Atlantic cod).